The following is a 260-amino-acid chain: tRNA (guanine-N(7)-)-methyltransferase (260 aa).

A disordered region spans residues 1-37 (MIHDPNDAGLPDQLPTPSSEAENSPAGDTTPPEEALH). The S-adenosyl-L-methionine site is built by Glu90, Glu115, Asp142, and Asp165. Residue Asp165 is part of the active site. Substrate is bound by residues Lys169, Asp201, and 236–239 (TKFE).

Belongs to the class I-like SAM-binding methyltransferase superfamily. TrmB family.

The enzyme catalyses guanosine(46) in tRNA + S-adenosyl-L-methionine = N(7)-methylguanosine(46) in tRNA + S-adenosyl-L-homocysteine. Its pathway is tRNA modification; N(7)-methylguanine-tRNA biosynthesis. Its function is as follows. Catalyzes the formation of N(7)-methylguanine at position 46 (m7G46) in tRNA. The polypeptide is tRNA (guanine-N(7)-)-methyltransferase (Paraburkholderia xenovorans (strain LB400)).